We begin with the raw amino-acid sequence, 284 residues long: 4-hydroxy-3-methylbut-2-enyl diphosphate reductase (284 aa).

Cysteine 12 contacts [4Fe-4S] cluster. (2E)-4-hydroxy-3-methylbut-2-enyl diphosphate contacts are provided by histidine 40 and histidine 72. Dimethylallyl diphosphate is bound by residues histidine 40 and histidine 72. Histidine 40 and histidine 72 together coordinate isopentenyl diphosphate. Position 94 (cysteine 94) interacts with [4Fe-4S] cluster. A (2E)-4-hydroxy-3-methylbut-2-enyl diphosphate-binding site is contributed by histidine 122. Histidine 122 is a binding site for dimethylallyl diphosphate. Histidine 122 contacts isopentenyl diphosphate. Catalysis depends on glutamate 124, which acts as the Proton donor. Threonine 161 lines the (2E)-4-hydroxy-3-methylbut-2-enyl diphosphate pocket. Cysteine 193 contacts [4Fe-4S] cluster. Positions 221, 223, and 264 each coordinate (2E)-4-hydroxy-3-methylbut-2-enyl diphosphate. 3 residues coordinate dimethylallyl diphosphate: serine 221, asparagine 223, and serine 264. Positions 221, 223, and 264 each coordinate isopentenyl diphosphate.

It belongs to the IspH family. Requires [4Fe-4S] cluster as cofactor.

The catalysed reaction is isopentenyl diphosphate + 2 oxidized [2Fe-2S]-[ferredoxin] + H2O = (2E)-4-hydroxy-3-methylbut-2-enyl diphosphate + 2 reduced [2Fe-2S]-[ferredoxin] + 2 H(+). It catalyses the reaction dimethylallyl diphosphate + 2 oxidized [2Fe-2S]-[ferredoxin] + H2O = (2E)-4-hydroxy-3-methylbut-2-enyl diphosphate + 2 reduced [2Fe-2S]-[ferredoxin] + 2 H(+). The protein operates within isoprenoid biosynthesis; dimethylallyl diphosphate biosynthesis; dimethylallyl diphosphate from (2E)-4-hydroxy-3-methylbutenyl diphosphate: step 1/1. It functions in the pathway isoprenoid biosynthesis; isopentenyl diphosphate biosynthesis via DXP pathway; isopentenyl diphosphate from 1-deoxy-D-xylulose 5-phosphate: step 6/6. Functionally, catalyzes the conversion of 1-hydroxy-2-methyl-2-(E)-butenyl 4-diphosphate (HMBPP) into a mixture of isopentenyl diphosphate (IPP) and dimethylallyl diphosphate (DMAPP). Acts in the terminal step of the DOXP/MEP pathway for isoprenoid precursor biosynthesis. This chain is 4-hydroxy-3-methylbut-2-enyl diphosphate reductase, found in Dehalococcoides mccartyi (strain CBDB1).